A 231-amino-acid polypeptide reads, in one-letter code: MAAAEMERTTSFDAAEKLKAADAGGGEVDDELEEGEIVEESNDAASYLGKEITVKHPLEHSWTFWFDNPTARSRQIDWGSSLRNVYTFSTVEDFWGAYNNIHHPSKLVMGADFHCFKHKIEPKWEDPICSNGGTWKMSFSKGKSDTSWLYTLLAMIGHQFDHGDEICGAVVNVRVKGEKIALWTKNAANETAQVSIGKQWKQFLDYSDSVGFIFHDDAKRLDRNAKNRYTV.

Basic and acidic residues predominate over residues 1-20; sequence MAAAEMERTTSFDAAEKLKA. Positions 1 to 34 are disordered; it reads MAAAEMERTTSFDAAEKLKAADAGGGEVDDELEE. EIF4G-binding regions lie at residues 56–59 and 66–102; these read HPLE and FDNP…NNIH. Residues 74 to 79, K106, and 124 to 125 each bind mRNA; these read RQIDWG and WE. Cysteines 129 and 167 form a disulfide. The EIF4G-binding stretch occupies residues 150–159; sequence YTLLAMIGHQ. MRNA contacts are provided by residues 174 to 179 and 219 to 223; these read RVKGEK and KRLDR.

This sequence belongs to the eukaryotic initiation factor 4E family. As to quaternary structure, EIF4F is a multi-subunit complex, the composition of which varies with external and internal environmental conditions. It is composed of at least EIF4A, EIF4E and EIF4G. EIF4E is also known to interact with other partners. In higher plants two isoforms of EIF4F have been identified, named isoform EIF4F and isoform EIF(iso)4F. Isoform EIF4F has subunits p220 and p26, whereas isoform EIF(iso)4F has subunits p82 and p28. (Microbial infection) Interacts with potyvirus viral genome-linked protein (VPg); this interaction is possible in susceptible hosts but impaired in resistant plants. According to the redox status, the Cys-129-Cys-167 disulfide bridge may have a role in regulating protein function by affecting its ability to bind capped mRNA.

The protein localises to the nucleus. It is found in the cytoplasm. Component of the protein complex eIF4F, which is involved in the recognition of the mRNA cap, ATP-dependent unwinding of 5'-terminal secondary structure and recruitment of mRNA to the ribosome. Recognizes and binds the 7-methylguanosine-containing mRNA cap during an early step in the initiation of protein synthesis and facilitates ribosome binding by inducing the unwinding of the mRNAs secondary structures. Key component of recessive resistance to potyviruses. In terms of biological role, (Microbial infection) Susceptibility host factor required for viral infection (e.g. Potato virus Y (PVY)) by recruiting viral RNAs to the host ribosomal complex via an interaction with viral genome-linked protein (VPg). Displayed sequence is the allele Eva1 that confers resistance to potato virus Y (PVY) by failing to interact with the viral VPg protein. This Solanum etuberosum (Wild potato) protein is Eukaryotic translation initiation factor 4E allele Eva1.